A 559-amino-acid polypeptide reads, in one-letter code: (-)-drimenol synthase (559 aa).

Mg(2+)-binding residues include Asp-311, Asp-315, Asp-456, Ser-460, and Glu-464. The DDXXD motif signature appears at 311-315; sequence DDIYD.

It belongs to the terpene synthase family. Requires Mg(2+) as cofactor.

The catalysed reaction is (2E,6E)-farnesyl diphosphate + H2O = (5S,9S,10S)-drim-7-en-11-ol + diphosphate. Its pathway is secondary metabolite biosynthesis; terpenoid biosynthesis. Its function is as follows. Catalyzes the conversion of (2E,6E)-farnesyl diphosphate (FPP) into drimenol, a precursor of the sesquiterpenoid polygodial. Polygodial has been shown to be an antifeedant for a number of herbivorous insects. The sequence is that of (-)-drimenol synthase from Persicaria hydropiper (Marshpepper knotweed).